We begin with the raw amino-acid sequence, 257 residues long: 3-deoxy-manno-octulosonate cytidylyltransferase (257 aa).

Belongs to the KdsB family.

The protein localises to the cytoplasm. It carries out the reaction 3-deoxy-alpha-D-manno-oct-2-ulosonate + CTP = CMP-3-deoxy-beta-D-manno-octulosonate + diphosphate. It functions in the pathway nucleotide-sugar biosynthesis; CMP-3-deoxy-D-manno-octulosonate biosynthesis; CMP-3-deoxy-D-manno-octulosonate from 3-deoxy-D-manno-octulosonate and CTP: step 1/1. It participates in bacterial outer membrane biogenesis; lipopolysaccharide biosynthesis. In terms of biological role, activates KDO (a required 8-carbon sugar) for incorporation into bacterial lipopolysaccharide in Gram-negative bacteria. The polypeptide is 3-deoxy-manno-octulosonate cytidylyltransferase (Stenotrophomonas maltophilia (strain K279a)).